The primary structure comprises 288 residues: ATP synthase gamma chain (288 aa).

Belongs to the ATPase gamma chain family. In terms of assembly, F-type ATPases have 2 components, CF(1) - the catalytic core - and CF(0) - the membrane proton channel. CF(1) has five subunits: alpha(3), beta(3), gamma(1), delta(1), epsilon(1). CF(0) has three main subunits: a, b and c.

The protein resides in the cell inner membrane. Its function is as follows. Produces ATP from ADP in the presence of a proton gradient across the membrane. The gamma chain is believed to be important in regulating ATPase activity and the flow of protons through the CF(0) complex. The polypeptide is ATP synthase gamma chain (Polaromonas sp. (strain JS666 / ATCC BAA-500)).